The primary structure comprises 110 residues: Nucleoid-associated protein CbuK_1603 (110 aa).

This sequence belongs to the YbaB/EbfC family. In terms of assembly, homodimer.

The protein localises to the cytoplasm. Its subcellular location is the nucleoid. Its function is as follows. Binds to DNA and alters its conformation. May be involved in regulation of gene expression, nucleoid organization and DNA protection. In Coxiella burnetii (strain CbuK_Q154) (Coxiella burnetii (strain Q154)), this protein is Nucleoid-associated protein CbuK_1603.